The following is an 864-amino-acid chain: MRLALLWALGLLGAGSPRPSPPLPNIGGTEEEQQASPERTQSRSLENQVVQDSPPINLTEVLQTGLPETLRIGLELDGENHILELQQNRDLVPGRPTLVWYQPDGTRMVSEGHSLENCCYRGRVQGRPSSWVSLCACSGIRGLVVLSPERSYTLELGPGDLQRPLIVSRIQDLLLPGHTCAPSWHAFVPTEAAPDLLLEQHHLRRLKRDVVTETKIVELVIVADNSEVRKYPDFQQLLNRTLEVALLLDTFFQPLNVRVALVGLEAWTQRDLIEMSSNPAVLLDNFLRWRRTDLLPRLPHDSAQLVTVTSFSGPMVGMAIQNSICSPDFSGGVNMDHSTSILGVASSIAHELGHSLGLDHDSPGNSCPCPGPAPAKSCIMEASTDFLPGLNFSNCSRWALEKALLDGMGSCLFEWPPSRAPMSSLCGNMFVDPGEQCDCGFPDECTDPCCDYFTCQLRPGAQCASDGPCCQNCKLQPAGWQCRLPTDDCDLPEFCLGDSSQCPPDIRLGDGEPCASGEAVCMHGRCASYTRQCQSLWGPGAQPAAPLCLQTANTRGNAFGSCGRSPSGSYMPCNLRDAICGQLQCQWGRNQPLLGSVQDQLSEVLEANGTQLNCSWVDLDLGNDVAQPLLALPGTACGPGLVCIGHRCQPVDLLGAQECRSKCHGHGVCDSSRHCHCDEGWAPPDCMTQLRATSSLTTGLLLSLLLLLVLVLLGASYWYRARLHQRLCQLKGSSCQYRAAQSGPPERPGPPQRAQQMPGTKQANVSFPVPPSRPLPPNPVPKKLQAELADRSNPPTRPLPADPVVWRPKPQGPTKPPPPRKPLPANPQGRPPLGDLPGPGDGSLQLVVPSRPAPPPPAASSLYL.

The N-terminal stretch at methionine 1–proline 17 is a signal peptide. The tract at residues proline 17–valine 49 is disordered. Positions arginine 18 to arginine 208 are excised as a propeptide. Residues glutamine 34–valine 49 show a composition bias toward polar residues. N-linked (GlcNAc...) asparagine glycosylation is present at asparagine 57. The Cysteine switch signature appears at histidine 178–histidine 185. A Zn(2+)-binding site is contributed by cysteine 180. Residues aspartate 209–threonine 698 lie on the Extracellular side of the membrane. One can recognise a Peptidase M12B domain in the interval lysine 215–proline 416. The N-linked (GlcNAc...) asparagine glycan is linked to asparagine 239. Cystine bridges form between cysteine 325/cysteine 411, cysteine 367/cysteine 395, cysteine 369/cysteine 378, and cysteine 482/cysteine 502. Histidine 350 is a Zn(2+) binding site. The active site involves glutamate 351. Residues histidine 354 and histidine 360 each contribute to the Zn(2+) site. Residues asparagine 391 and asparagine 394 are each glycosylated (N-linked (GlcNAc...) asparagine). A Disintegrin domain is found at serine 423–aspartate 510. Asparagine 608 and asparagine 613 each carry an N-linked (GlcNAc...) asparagine glycan. 3 disulfides stabilise this stretch: cysteine 659-cysteine 669, cysteine 663-cysteine 675, and cysteine 677-cysteine 686. Positions cysteine 659–methionine 687 constitute an EGF-like domain. Residues glycine 699–tyrosine 719 form a helical membrane-spanning segment. Residues tyrosine 717 and tyrosine 737 each carry the phosphotyrosine; by HCK and LCK modification. Topologically, residues arginine 720 to leucine 864 are cytoplasmic. The segment at arginine 738 to leucine 864 is disordered. A compositionally biased stretch (polar residues) spans arginine 753 to valine 765. 2 stretches are compositionally biased toward pro residues: residues proline 768–valine 780 and proline 810–alanine 825. The SH3-binding motif lies at proline 816 to proline 822. A compositionally biased stretch (low complexity) spans asparagine 826–serine 850. An SH3-binding motif is present at residues arginine 851–proline 857.

In terms of assembly, interacts with ITAGV-ITGB3 (vitronectin receptor). Interacts with SH3GL2 and SNX9; this interaction occurs preferentially with ADAM15 precursor, rather than the processed form, suggesting it occurs in a secretory pathway compartment prior to the medial Golgi. Interacts with ITAG9-ITGB1. Interacts specifically with Src family protein-tyrosine kinases (PTKs). Interacts with SH3PXD2A. Interacts with ITAGV-ITGB1. Interacts with GRB2, HCK, ITSN1, ITSN2, LYN, MAPK1, MAPK3, NCF1, NCK1, nephrocystin, PTK6, SNX33, LCK and SRC. Zn(2+) is required as a cofactor. Post-translationally, the precursor is cleaved by a furin endopeptidase. Phosphorylation increases association with PTKs. As to expression, predominantly expressed in brain, spinal cord, sciatic nerve and lung. Expressed at lower levels in all other tissues. In the peripheral nervous system, expressed predominantly by Schwann cells. In the central nervous system, preferentially expressed by neuronal cells.

It is found in the endomembrane system. The protein resides in the cell junction. It localises to the adherens junction. The protein localises to the cell projection. Its subcellular location is the cilium. It is found in the flagellum. The protein resides in the cytoplasmic vesicle. It localises to the secretory vesicle. The protein localises to the acrosome. Its function is as follows. Active metalloproteinase with gelatinolytic and collagenolytic activity. Plays a role in the wound healing process. Mediates both heterotypic intraepithelial cell/T-cell interactions and homotypic T-cell aggregation. Inhibits beta-1 integrin-mediated cell adhesion and migration of airway smooth muscle cells. Suppresses cell motility on or towards fibronectin possibly by driving alpha-v/beta-1 integrin (ITAGV-ITGB1) cell surface expression via ERK1/2 inactivation. Cleaves E-cadherin in response to growth factor deprivation. Plays a role in glomerular cell migration. Plays a role in pathological neovascularization. May play a role in cartilage remodeling. May be proteolytically processed, during sperm epididymal maturation and the acrosome reaction. May play a role in sperm-egg binding through its disintegrin domain. This Rattus norvegicus (Rat) protein is Disintegrin and metalloproteinase domain-containing protein 15 (Adam15).